A 388-amino-acid chain; its full sequence is Succinyl-diaminopimelate desuccinylase (388 aa).

H72 contacts Zn(2+). Residue D74 is part of the active site. Residue D105 participates in Zn(2+) binding. The active-site Proton acceptor is the E139. Residues E140, E168, and H353 each contribute to the Zn(2+) site.

It belongs to the peptidase M20A family. DapE subfamily. Homodimer. Requires Zn(2+) as cofactor. Co(2+) is required as a cofactor.

It catalyses the reaction N-succinyl-(2S,6S)-2,6-diaminopimelate + H2O = (2S,6S)-2,6-diaminopimelate + succinate. It functions in the pathway amino-acid biosynthesis; L-lysine biosynthesis via DAP pathway; LL-2,6-diaminopimelate from (S)-tetrahydrodipicolinate (succinylase route): step 3/3. In terms of biological role, catalyzes the hydrolysis of N-succinyl-L,L-diaminopimelic acid (SDAP), forming succinate and LL-2,6-diaminopimelate (DAP), an intermediate involved in the bacterial biosynthesis of lysine and meso-diaminopimelic acid, an essential component of bacterial cell walls. The polypeptide is Succinyl-diaminopimelate desuccinylase (Orientia tsutsugamushi (strain Boryong) (Rickettsia tsutsugamushi)).